Reading from the N-terminus, the 157-residue chain is Protein Smg (157 aa).

It belongs to the Smg family.

The protein is Protein Smg of Buchnera aphidicola subsp. Acyrthosiphon pisum (strain 5A).